The chain runs to 985 residues: Guanine nucleotide exchange protein smcr8b (985 aa).

A uDENN FLCN/SMCR8-type domain is found at 47 to 225; the sequence is ISSAKLKKDF…VKCSSEREPI (179 aa). Residues 242 to 292 are compositionally biased toward basic and acidic residues; sequence NEKSSHTDEISPQEKDGCGNSRKVEVKLENENRSHFEHEQYGKQRKDKPDK. 3 disordered regions span residues 242–301, 502–528, and 639–659; these read NEKS…PLAN, QSQVQHSTLNTPSKDNRPQVADKSPAE, and EESPEQETDEKNSSQYQEDNN. The cDENN FLCN/SMCR8-type domain maps to 390-895; it reads RLKTLEELCD…LINLLVEPKS (506 aa). The span at 502 to 514 shows a compositional bias: polar residues; it reads QSQVQHSTLNTPS. Residues 904–962 enclose the dDENN FLCN/SMCR8-type domain; that stretch reads FTFAQSVQSKLVTKAFLLTFSHGHPSPSRPQGSSGTECFLSELHTDDKKILRYLSELIK.

It belongs to the SMCR8 family. Component of the C9orf72-SMCR8 complex. The C9orf72-SMCR8 complex associates with the ATG1/ULK1 kinase complex.

The protein localises to the cytoplasm. Its subcellular location is the nucleus. Its function is as follows. Component of the C9orf72-SMCR8 complex, a complex that has guanine nucleotide exchange factor (GEF) activity and regulates autophagy. In the complex, C9orf72 and SMCR8 probably constitute the catalytic subunits that promote the exchange of GDP to GTP, converting inactive GDP-bound RAB8A and RAB39B into their active GTP-bound form, thereby promoting autophagosome maturation. The C9orf72-SMCR8 complex also acts as a negative regulator of autophagy initiation by interacting with the ATG1/ULK1 kinase complex and inhibiting its protein kinase activity. The protein is Guanine nucleotide exchange protein smcr8b (smcr8b) of Danio rerio (Zebrafish).